The following is a 287-amino-acid chain: Protoheme IX farnesyltransferase (287 aa).

A run of 7 helical transmembrane segments spans residues 19-39, 100-120, 134-154, 162-182, 212-232, 233-253, and 267-287; these read LMVA…VTIT, MVLC…IVAV, FALL…WLAV, MLVV…WLHA, VWFH…LLEG, VGMR…AMLA, and VLCA…VSLF.

Belongs to the UbiA prenyltransferase family. Protoheme IX farnesyltransferase subfamily.

It is found in the cell inner membrane. The catalysed reaction is heme b + (2E,6E)-farnesyl diphosphate + H2O = Fe(II)-heme o + diphosphate. It participates in porphyrin-containing compound metabolism; heme O biosynthesis; heme O from protoheme: step 1/1. Its function is as follows. Converts heme B (protoheme IX) to heme O by substitution of the vinyl group on carbon 2 of heme B porphyrin ring with a hydroxyethyl farnesyl side group. This chain is Protoheme IX farnesyltransferase, found in Nitratidesulfovibrio vulgaris (strain DP4) (Desulfovibrio vulgaris).